The chain runs to 121 residues: Large ribosomal subunit protein bL12 (121 aa).

It belongs to the bacterial ribosomal protein bL12 family. In terms of assembly, homodimer. Part of the ribosomal stalk of the 50S ribosomal subunit. Forms a multimeric L10(L12)X complex, where L10 forms an elongated spine to which 2 to 4 L12 dimers bind in a sequential fashion. Binds GTP-bound translation factors.

Functionally, forms part of the ribosomal stalk which helps the ribosome interact with GTP-bound translation factors. Is thus essential for accurate translation. The polypeptide is Large ribosomal subunit protein bL12 (Escherichia coli O45:K1 (strain S88 / ExPEC)).